Consider the following 110-residue polypeptide: Large ribosomal subunit protein uL22 (110 aa).

The protein belongs to the universal ribosomal protein uL22 family. In terms of assembly, part of the 50S ribosomal subunit.

Functionally, this protein binds specifically to 23S rRNA; its binding is stimulated by other ribosomal proteins, e.g. L4, L17, and L20. It is important during the early stages of 50S assembly. It makes multiple contacts with different domains of the 23S rRNA in the assembled 50S subunit and ribosome. Its function is as follows. The globular domain of the protein is located near the polypeptide exit tunnel on the outside of the subunit, while an extended beta-hairpin is found that lines the wall of the exit tunnel in the center of the 70S ribosome. The chain is Large ribosomal subunit protein uL22 from Hydrogenovibrio crunogenus (strain DSM 25203 / XCL-2) (Thiomicrospira crunogena).